The primary structure comprises 211 residues: MAETCKMKYSVLDSPLGKMELSGCERGLHGIRLLSGKTPNTDPTEAPATPEVLGGPEGVPEPLVQCTAWLEAYFREPAATEGLPLPALHHPVFQQDSFTRQVLWKLLKVVKFGETVSYQQLAALAGNPKAARAVGGAMRSNPVPILIPCHRVVRSDGAIGHYSGGGQAVKEWLLAHEGIPTGQPASKGLGLTGTWLKSSFESTSSEPSGRN.

Zn(2+) is bound at residue Cys5. A Phosphoserine modification is found at Ser14. Zn(2+) contacts are provided by Cys24 and His29. The disordered stretch occupies residues 35–57 (SGKTPNTDPTEAPATPEVLGGPE). Position 89 (His89) interacts with Zn(2+). 5 residues coordinate DNA: Thr99, Tyr118, Gln119, Asn127, and Arg132. Cys149 serves as the catalytic Nucleophile; methyl group acceptor. Ser155 contributes to the DNA binding site. At Ser205 the chain carries Phosphoserine.

Belongs to the MGMT family. It depends on Zn(2+) as a cofactor.

The protein localises to the nucleus. It catalyses the reaction a 6-O-methyl-2'-deoxyguanosine in DNA + L-cysteinyl-[protein] = S-methyl-L-cysteinyl-[protein] + a 2'-deoxyguanosine in DNA. The enzyme catalyses a 4-O-methyl-thymidine in DNA + L-cysteinyl-[protein] = a thymidine in DNA + S-methyl-L-cysteinyl-[protein]. In terms of biological role, involved in the cellular defense against the biological effects of O6-methylguanine (O6-MeG) and O4-methylthymine (O4-MeT) in DNA. Repairs the methylated nucleobase in DNA by stoichiometrically transferring the methyl group to a cysteine residue in the enzyme. This is a suicide reaction: the enzyme is irreversibly inactivated. The sequence is that of Methylated-DNA--protein-cysteine methyltransferase (Mgmt) from Mus musculus (Mouse).